A 321-amino-acid polypeptide reads, in one-letter code: Sideroflexin-3 (321 aa).

N-acetylmethionine is present on M1. The next 4 helical transmembrane spans lie at 146-164 (LGMA…ALGL), 174-194 (LVGR…NIPL), 226-246 (FQVV…PPVI), and 266-286 (LQMG…CALF).

The protein belongs to the sideroflexin family.

The protein localises to the mitochondrion membrane. The enzyme catalyses L-serine(in) = L-serine(out). Functionally, mitochondrial serine transporter that mediates transport of serine into mitochondria, an important step of the one-carbon metabolism pathway. Mitochondrial serine is converted to glycine and formate, which then exits to the cytosol where it is used to generate the charged folates that serve as one-carbon donors. This Bos taurus (Bovine) protein is Sideroflexin-3 (SFXN3).